We begin with the raw amino-acid sequence, 1608 residues long: Hemolysin (1608 aa).

The signal sequence occupies residues 1–30; that stretch reads MKNNNFRLSAAGKLAAALAIILAASAGAYA. 6 disordered regions span residues 296–315, 452–488, 716–737, 971–1030, 1168–1199, and 1437–1469; these read SRVD…QNYR, KSSE…LRSE, EHTR…LSGG, AVNL…SASQ, AEST…TGGN, and PQQD…QGPL. Composition is skewed to polar residues over residues 303 to 313 and 460 to 474; these read SNKNGGDNYQN and RNHT…WSNS. Composition is skewed to basic and acidic residues over residues 478-488 and 716-726; these read ESLKASELRSE and EHTRDSEKTTR. The span at 727–736 shows a compositional bias: polar residues; it reads TENSASSLSG. The segment covering 977–996 has biased composition (basic and acidic residues); it reads DSHRSEAAANRQDEQSRDTR. Residues 1021-1030 are compositionally biased toward polar residues; sequence TQRSNSSASQ.

The protein localises to the cell outer membrane. Its function is as follows. Bacterial hemolysins are exotoxins that attack blood cell membranes and cause cell rupture by mechanisms not clearly defined. In terms of biological role, cell-bound hemolysin, which releases heme-iron from erythrocytes by interaction with the erythrocyte membrane. ShlA requires ShlB function. In Serratia marcescens, this protein is Hemolysin (shlA).